Here is a 721-residue protein sequence, read N- to C-terminus: Ribosomal RNA large subunit methyltransferase K/L (721 aa).

The THUMP domain maps to 56–167 (GMYKACLWSR…REVVTVSIDL (112 aa)).

Belongs to the methyltransferase superfamily. RlmKL family.

The protein localises to the cytoplasm. It catalyses the reaction guanosine(2445) in 23S rRNA + S-adenosyl-L-methionine = N(2)-methylguanosine(2445) in 23S rRNA + S-adenosyl-L-homocysteine + H(+). The enzyme catalyses guanosine(2069) in 23S rRNA + S-adenosyl-L-methionine = N(2)-methylguanosine(2069) in 23S rRNA + S-adenosyl-L-homocysteine + H(+). Its function is as follows. Specifically methylates the guanine in position 2445 (m2G2445) and the guanine in position 2069 (m7G2069) of 23S rRNA. This is Ribosomal RNA large subunit methyltransferase K/L from Marinomonas sp. (strain MWYL1).